We begin with the raw amino-acid sequence, 353 residues long: MTAILERRESTSLWGRFCNWITSTENRLYIGWFGVLMIPTLLTATSVFIIAFIAAPPVDIDGIREPVSGSLLYGNNIISGAIIPTSAAIGLHFYPIWEAASVDEWLYNGGPYELIVLHFLLGVACYMGREWELSFRLGMRPWIAVAYSAPVAAATAVFLIYPIGQGSFSDGMPLGISGTFNFMIVFQAEHNILMHPFHMLGVAGVFGGSLFSAMHGSLVTSSLIRETTENESANEGYRFGQEEETYNIVAAHGYFGRLIFQYASFNNSRSLHFFLAAWPVVGIWFTALGISTMAFNLNGFNFNQSVVDSQGRVINTWADIINRANLGMEVMHERNAHNFPLDLAALEVPSLNG.

At Thr2 the chain carries N-acetylthreonine. Thr2 is subject to Phosphothreonine. 3 consecutive transmembrane segments (helical) span residues 29–46 (YIGW…TATS), 118–133 (HFLL…EWEL), and 142–156 (WIAV…AATA). His118 is a chlorophyll a binding site. Tyr126 contributes to the pheophytin a binding site. The [CaMn4O5] cluster site is built by Asp170 and Glu189. Residues 197–218 (FHMLGVAGVFGGSLFSAMHGSL) form a helical membrane-spanning segment. His198 contributes to the chlorophyll a binding site. Residues His215 and 264 to 265 (SF) each bind a quinone. His215 is a binding site for Fe cation. His272 is a binding site for Fe cation. The chain crosses the membrane as a helical span at residues 274-288 (FLAAWPVVGIWFTAL). [CaMn4O5] cluster-binding residues include His332, Glu333, Asp342, and Ala344. The propeptide occupies 345–353 (ALEVPSLNG).

It belongs to the reaction center PufL/M/PsbA/D family. PSII is composed of 1 copy each of membrane proteins PsbA, PsbB, PsbC, PsbD, PsbE, PsbF, PsbH, PsbI, PsbJ, PsbK, PsbL, PsbM, PsbT, PsbX, PsbY, PsbZ, Psb30/Ycf12, at least 3 peripheral proteins of the oxygen-evolving complex and a large number of cofactors. It forms dimeric complexes. The cofactor is The D1/D2 heterodimer binds P680, chlorophylls that are the primary electron donor of PSII, and subsequent electron acceptors. It shares a non-heme iron and each subunit binds pheophytin, quinone, additional chlorophylls, carotenoids and lipids. D1 provides most of the ligands for the Mn4-Ca-O5 cluster of the oxygen-evolving complex (OEC). There is also a Cl(-1) ion associated with D1 and D2, which is required for oxygen evolution. The PSII complex binds additional chlorophylls, carotenoids and specific lipids.. Tyr-161 forms a radical intermediate that is referred to as redox-active TyrZ, YZ or Y-Z. In terms of processing, C-terminally processed by CTPA; processing is essential to allow assembly of the oxygen-evolving complex and thus photosynthetic growth.

The protein localises to the plastid. The protein resides in the chloroplast thylakoid membrane. It carries out the reaction 2 a plastoquinone + 4 hnu + 2 H2O = 2 a plastoquinol + O2. Its function is as follows. Photosystem II (PSII) is a light-driven water:plastoquinone oxidoreductase that uses light energy to abstract electrons from H(2)O, generating O(2) and a proton gradient subsequently used for ATP formation. It consists of a core antenna complex that captures photons, and an electron transfer chain that converts photonic excitation into a charge separation. The D1/D2 (PsbA/PsbD) reaction center heterodimer binds P680, the primary electron donor of PSII as well as several subsequent electron acceptors. The protein is Photosystem II protein D1 of Oryza nivara (Indian wild rice).